The following is a 434-amino-acid chain: APETALA2-like protein 2 (434 aa).

The interval 1-116 is disordered; it reads MLLDLNVESP…KTRRGPRSRS (116 aa). The segment covering 12–23 has biased composition (low complexity); that stretch reads RSGTSSSSVLNS. Residues 25–38 show a composition bias toward gly residues; the sequence is DAGGGGGGGGGGGL. The span at 72–87 shows a compositional bias: pro residues; it reads LPPPPPAAPSPAPAWQ. A compositionally biased stretch (basic residues) spans 104–113; that stretch reads VAKKTRRGPR. Residues 106–115 carry the Nuclear localization signal motif; sequence KKTRRGPRSR. DNA-binding regions (AP2/ERF) lie at residues 118 to 174 and 210 to 267; these read QYRG…INFN and KFRG…TNFE. The EAR signature appears at 291 to 295; that stretch reads LDLRI.

It belongs to the AP2/ERF transcription factor family. AP2 subfamily. In terms of assembly, may form homodimer. Interacts with TPR2/ASP1.

It is found in the nucleus. In terms of biological role, probable transcription factor. Involved in spikelet transition. Together with SNB, controls synergistically inflorescence architecture and floral meristem establishment via the regulation of spatio-temporal expression of B- and E-function floral organ identity genes in the lodicules and of spikelet meristem genes. Prevents lemma and palea elongation as well as grain growth. The sequence is that of APETALA2-like protein 2 from Oryza sativa subsp. indica (Rice).